The chain runs to 223 residues: 2-C-methyl-D-erythritol 4-phosphate cytidylyltransferase (223 aa).

Belongs to the IspD/TarI cytidylyltransferase family. IspD subfamily.

It carries out the reaction 2-C-methyl-D-erythritol 4-phosphate + CTP + H(+) = 4-CDP-2-C-methyl-D-erythritol + diphosphate. The protein operates within isoprenoid biosynthesis; isopentenyl diphosphate biosynthesis via DXP pathway; isopentenyl diphosphate from 1-deoxy-D-xylulose 5-phosphate: step 2/6. Catalyzes the formation of 4-diphosphocytidyl-2-C-methyl-D-erythritol from CTP and 2-C-methyl-D-erythritol 4-phosphate (MEP). This is 2-C-methyl-D-erythritol 4-phosphate cytidylyltransferase from Prochlorococcus marinus (strain AS9601).